A 158-amino-acid polypeptide reads, in one-letter code: MNELPFWKSKTLAEMTAAEWESLCDGCGLCCLNKIEEWDSGDVYFTSVSCKLLDGHSCRCSSYETRWDFVPDCVQLTRENVPEIAWLPPTCGYRLINEGRDLYWWHPLVSGDPETVHAAGISARGRTINETEIDIDDLEDYVVDWPLTVGEEKNEEEA.

It belongs to the UPF0260 family.

This Rhizobium etli (strain ATCC 51251 / DSM 11541 / JCM 21823 / NBRC 15573 / CFN 42) protein is UPF0260 protein RHE_CH01262.